Reading from the N-terminus, the 303-residue chain is Polyisoprenyl-teichoic acid--peptidoglycan teichoic acid transferase TagU (303 aa).

Over 1-4 (MKKK) the chain is Cytoplasmic. The helical; Signal-anchor for type II membrane protein transmembrane segment at 5-25 (ILFWVLGILGVLIIGGGIYAY) threads the bilayer. Residues 26–303 (NVYSSVSNTL…KLRTHLEVTK (278 aa)) lie on the Extracellular side of the membrane.

This sequence belongs to the LytR/CpsA/Psr (LCP) family.

The protein localises to the cell membrane. Its pathway is cell wall biogenesis. In terms of biological role, may catalyze the final step in cell wall teichoic acid biosynthesis, the transfer of the anionic cell wall polymers (APs) from their lipid-linked precursor to the cell wall peptidoglycan (PG). The protein is Polyisoprenyl-teichoic acid--peptidoglycan teichoic acid transferase TagU of Bacillus anthracis (strain A0248).